Reading from the N-terminus, the 267-residue chain is Putative transcription factor Ovo-like 1 (267 aa).

4 consecutive C2H2-type zinc fingers follow at residues Phe-118–His-140, His-146–His-168, Tyr-174–His-197, and Tyr-213–His-236.

In terms of tissue distribution, expressed in skin, testis, kidney and weakly in lung. Not detected in heart, brain, spleen, liver and skeletal muscle.

It localises to the nucleus. Its function is as follows. Putative transcription factor. Involved in hair formation and spermatogenesis. May function in the differentiation and/or maintenance of the urogenital system. The chain is Putative transcription factor Ovo-like 1 (Ovol1) from Mus musculus (Mouse).